The chain runs to 371 residues: Collectin-46 (371 aa).

Residues 1-20 (MLLLPLSVLLLLTQPWRSLG) form the signal peptide. Positions 43–215 (PEGGLPGRDG…ERGAKGESGL (173 aa)) are disordered. Residues 46-216 (GLPGRDGQDG…RGAKGESGLA (171 aa)) form the Collagen-like domain. Residues 51 to 65 (DGQDGREGPQGEKGD) are compositionally biased toward basic and acidic residues. N-linked (GlcNAc...) asparagine glycosylation is present at asparagine 90. Residues 113-128 (PAGREGPSGKQGSMGP) are compositionally biased toward low complexity. Residues 139-148 (GPKGGMGAPG) are compositionally biased toward gly residues. Low complexity predominate over residues 170-191 (APGSAGVAGPAGAIGPQGPSGA). Residues 198–210 (KGDRGDPGERGAK) are compositionally biased toward basic and acidic residues. Residues 201-203 (RGD) carry the Cell attachment site motif. In terms of domain architecture, C-type lectin spans 273-371 (QLCREAKGQL…SEPLLVICEF (99 aa)). Disulfide bonds link cysteine 275/cysteine 369 and cysteine 347/cysteine 361.

It belongs to the SFTPD family. As to quaternary structure, oligomeric complex of 4 set of homotrimers. Post-translationally, hydroxylated. Highly expressed in thymus and liver.

It is found in the secreted. This is Collectin-46 (CL46) from Bos taurus (Bovine).